A 274-amino-acid polypeptide reads, in one-letter code: Shikimate dehydrogenase (NADP(+)) (274 aa).

Shikimate-binding positions include 20–22 (SKS) and Thr68. The Proton acceptor role is filled by Lys72. Asp84 serves as a coordination point for NADP(+). Shikimate is bound by residues Asn93 and Asp109. NADP(+)-binding positions include 131–135 (GAGGA) and Leu217. Position 219 (Tyr219) interacts with shikimate. Position 240 (Gly240) interacts with NADP(+).

The protein belongs to the shikimate dehydrogenase family. In terms of assembly, homodimer.

It catalyses the reaction shikimate + NADP(+) = 3-dehydroshikimate + NADPH + H(+). The protein operates within metabolic intermediate biosynthesis; chorismate biosynthesis; chorismate from D-erythrose 4-phosphate and phosphoenolpyruvate: step 4/7. Involved in the biosynthesis of the chorismate, which leads to the biosynthesis of aromatic amino acids. Catalyzes the reversible NADPH linked reduction of 3-dehydroshikimate (DHSA) to yield shikimate (SA). The chain is Shikimate dehydrogenase (NADP(+)) from Sphingopyxis alaskensis (strain DSM 13593 / LMG 18877 / RB2256) (Sphingomonas alaskensis).